We begin with the raw amino-acid sequence, 1390 residues long: DNA-directed RNA polymerase subunit beta'' (1390 aa).

Zn(2+) contacts are provided by Cys220, Cys291, Cys298, and Cys301.

It belongs to the RNA polymerase beta' chain family. RpoC2 subfamily. In terms of assembly, in plastids the minimal PEP RNA polymerase catalytic core is composed of four subunits: alpha, beta, beta', and beta''. When a (nuclear-encoded) sigma factor is associated with the core the holoenzyme is formed, which can initiate transcription. It depends on Zn(2+) as a cofactor.

It is found in the plastid. The protein resides in the chloroplast. It carries out the reaction RNA(n) + a ribonucleoside 5'-triphosphate = RNA(n+1) + diphosphate. In terms of biological role, DNA-dependent RNA polymerase catalyzes the transcription of DNA into RNA using the four ribonucleoside triphosphates as substrates. The sequence is that of DNA-directed RNA polymerase subunit beta'' from Populus alba (White poplar).